We begin with the raw amino-acid sequence, 252 residues long: Flagellar brake protein YcgR (252 aa).

The region spanning glutamine 123–threonine 238 is the PilZ domain.

It belongs to the YcgR family. In terms of assembly, monomer. Interacts with the flagellar basal bodies.

The protein resides in the bacterial flagellum basal body. Functionally, acts as a flagellar brake, regulating swimming and swarming in a bis-(3'-5') cyclic diguanylic acid (c-di-GMP)-dependent manner. Binds 1 c-di-GMP dimer per subunit. Increasing levels of c-di-GMP lead to decreased motility. The protein is Flagellar brake protein YcgR of Janthinobacterium sp. (strain Marseille) (Minibacterium massiliensis).